A 443-amino-acid polypeptide reads, in one-letter code: Glutamate-1-semialdehyde 2,1-aminomutase (443 aa).

Lys281 carries the N6-(pyridoxal phosphate)lysine modification.

The protein belongs to the class-III pyridoxal-phosphate-dependent aminotransferase family. HemL subfamily. In terms of assembly, homodimer. Pyridoxal 5'-phosphate serves as cofactor.

Its subcellular location is the cytoplasm. It catalyses the reaction (S)-4-amino-5-oxopentanoate = 5-aminolevulinate. Its pathway is porphyrin-containing compound metabolism; protoporphyrin-IX biosynthesis; 5-aminolevulinate from L-glutamyl-tRNA(Glu): step 2/2. This chain is Glutamate-1-semialdehyde 2,1-aminomutase, found in Leptospira interrogans serogroup Icterohaemorrhagiae serovar Lai (strain 56601).